Consider the following 170-residue polypeptide: Lipoprotein signal peptidase (170 aa).

A run of 3 helical transmembrane segments spans residues 12 to 32 (WYWV…WVLS), 67 to 87 (WQRW…SVWL), and 94 to 113 (MWRL…GNLI). Residues Asp123 and Asp141 contribute to the active site. Residues 139–159 (IADSAICVGAGLIILDSFVAG) form a helical membrane-spanning segment.

The protein belongs to the peptidase A8 family.

The protein resides in the cell inner membrane. It catalyses the reaction Release of signal peptides from bacterial membrane prolipoproteins. Hydrolyzes -Xaa-Yaa-Zaa-|-(S,diacylglyceryl)Cys-, in which Xaa is hydrophobic (preferably Leu), and Yaa (Ala or Ser) and Zaa (Gly or Ala) have small, neutral side chains.. The protein operates within protein modification; lipoprotein biosynthesis (signal peptide cleavage). Its function is as follows. This protein specifically catalyzes the removal of signal peptides from prolipoproteins. The protein is Lipoprotein signal peptidase of Shewanella pealeana (strain ATCC 700345 / ANG-SQ1).